A 317-amino-acid chain; its full sequence is MYKNYLQRTLVLLLCFILYFFTFPLGGKAYSLNNWNKPIKNSVTTKQWMSALPDTTNLAALSIPGTHDTMSYNGDITWTLTKPLAQTQTMSLYQQLEAGIRYIDIRAKDNLNIYHGPIFLNASLSGVLETITQFLKKNPKETIIMRLKDEQNSNDSFDYRIQPLINIYKDYFYTTPRTDTSNKIPTLKDVRGKILLLSENHTKKPLVINSRKFGMQFGAPNQVIQDDYNGPSVKTKFKEIVQTAYQASKADNKLFLNHISATSLTFTPRQYAAALNNKVEQFVLNLTSEKVRGLGILIMDFPEKQTIKNIIKNNKFN.

The N-terminal stretch at 1 to 22 (MYKNYLQRTLVLLLCFILYFFT) is a signal peptide. One can recognise a PI-PLC X-box domain in the interval 58–196 (LAALSIPGTH…LKDVRGKILL (139 aa)). H67 functions as the Proton acceptor in the catalytic mechanism. The active-site Proton donor is the H115.

As to quaternary structure, monomer.

The protein resides in the secreted. The protein localises to the cytoplasm. The enzyme catalyses a 1,2-diacyl-sn-glycero-3-phospho-(1D-myo-inositol) = 1D-myo-inositol 1,2-cyclic phosphate + a 1,2-diacyl-sn-glycerol. Its function is as follows. Cleaves glycosylphosphatidylinositol (GPI) and phosphatidylinositol (PI) anchors but not PI phosphates. Important factor in pathogenesis, PI-PLC activity is present only in virulent listeria species. It may participate in the lysis of the phagolysosomal membrane. The protein is 1-phosphatidylinositol phosphodiesterase (plcA) of Listeria monocytogenes serovar 1/2a (strain ATCC BAA-679 / EGD-e).